The following is a 96-amino-acid chain: Prokineticin Bv8-like peptide 2 (96 aa).

Positions 1-19 (MKCFAQIVVLLLVIAFSHG) are cleaved as a signal peptide. Intrachain disulfides connect cysteine 26–cysteine 38, cysteine 32–cysteine 50, cysteine 37–cysteine 78, cysteine 60–cysteine 86, and cysteine 80–cysteine 95.

It belongs to the AVIT (prokineticin) family. As to expression, expressed by the skin glands.

It localises to the secreted. Its function is as follows. Potent agonist for both PKR1/PROKR1 and PKR2/PROKR2, and inducer of a potent and long-lasting hyperalgesia. Also potentiates capsaicin-induced TRPV1 current when tested on DRG neurons. At subnanomolar concentrations, this protein both induces potent chemotaxis of macrophages and stimulates LPS-induced production of the pro-inflammatory cytokines IL-1 and IL-12. In vivo, potently stimulates the contraction of the guinea-pig gastrointestinal (GI) smooth muscle (nanomolar concentration) and rabbit aortic rings. The protein is Prokineticin Bv8-like peptide 2 of Bombina maxima (Giant fire-bellied toad).